The primary structure comprises 78 residues: Large ribosomal subunit protein bL28 (78 aa).

The segment at 1 to 22 (MSKVCQVTGKRPTTGNNVSHAN) is disordered. Polar residues predominate over residues 11-22 (RPTTGNNVSHAN).

Belongs to the bacterial ribosomal protein bL28 family.

The chain is Large ribosomal subunit protein bL28 from Alkalilimnicola ehrlichii (strain ATCC BAA-1101 / DSM 17681 / MLHE-1).